Reading from the N-terminus, the 135-residue chain is Auxin-responsive protein SAUR66 (135 aa).

This sequence belongs to the ARG7 family.

Its subcellular location is the cell membrane. In terms of biological role, may promote auxin-stimulated organ elongation, such as hypocotyls, stamen filaments and petals. This is Auxin-responsive protein SAUR66 from Arabidopsis thaliana (Mouse-ear cress).